The chain runs to 911 residues: Protein translocase subunit SecA (911 aa).

ATP contacts are provided by residues Gln-87, 105–109 (GEGKT), and Asp-499. Residues Cys-895, Cys-897, Cys-906, and His-907 each contribute to the Zn(2+) site.

It belongs to the SecA family. In terms of assembly, monomer and homodimer. Part of the essential Sec protein translocation apparatus which comprises SecA, SecYEG and auxiliary proteins SecDF-YajC and YidC. It depends on Zn(2+) as a cofactor.

The protein localises to the cell inner membrane. The protein resides in the cytoplasm. It carries out the reaction ATP + H2O + cellular proteinSide 1 = ADP + phosphate + cellular proteinSide 2.. Functionally, part of the Sec protein translocase complex. Interacts with the SecYEG preprotein conducting channel. Has a central role in coupling the hydrolysis of ATP to the transfer of proteins into and across the cell membrane, serving both as a receptor for the preprotein-SecB complex and as an ATP-driven molecular motor driving the stepwise translocation of polypeptide chains across the membrane. This is Protein translocase subunit SecA from Novosphingobium aromaticivorans (strain ATCC 700278 / DSM 12444 / CCUG 56034 / CIP 105152 / NBRC 16084 / F199).